A 399-amino-acid polypeptide reads, in one-letter code: MSKEKVILAYSGGLDTSVAITWLKKDYDVIAVCMDVGEGKDLEFIHDKALTVGAVESYVLDVKDEFAEDYVLPALQAHAYYEQKYPLVSALSRPIIAKKLVEIAHKTGATTIAHGCTGKGNDQVRFEVAIAALDPSLKVVAPVREWKWSREEEIEYAKANGVPVPADLDNPYSVDQNLWGRANECGVLENPWNQAPEEAFGITNSPESAPDEAEYVDVTFKEGKPVALNGKEMKLADLIQEMNVIAGKHGVGRIDHVENRLVGIKSREIYECPGAIALLTAHKEIEDLTLVREVSHFKPILENELSNLIYNALWFSPATEAIIAYIKETQKVVNGIAKVKLYKGHAQVVARQSANSLYDENLATYTSADSFDQDAAIGFIKLWGLPTQVNSQVNHPFDK.

9-17 (AYSGGLDTS) serves as a coordination point for ATP. An L-citrulline-binding site is contributed by tyrosine 85. Glycine 115 serves as a coordination point for ATP. Threonine 117, asparagine 121, and aspartate 122 together coordinate L-aspartate. L-citrulline is bound at residue asparagine 121. Positions 125, 173, 258, and 270 each coordinate L-citrulline.

Belongs to the argininosuccinate synthase family. Type 1 subfamily. As to quaternary structure, homotetramer.

It localises to the cytoplasm. The catalysed reaction is L-citrulline + L-aspartate + ATP = 2-(N(omega)-L-arginino)succinate + AMP + diphosphate + H(+). Its pathway is amino-acid biosynthesis; L-arginine biosynthesis; L-arginine from L-ornithine and carbamoyl phosphate: step 2/3. This is Argininosuccinate synthase from Streptococcus thermophilus (strain CNRZ 1066).